Here is a 526-residue protein sequence, read N- to C-terminus: Peptide chain release factor 3 (526 aa).

The region spanning 9–277 (DKRRTFAIIS…GIVEWAPKPL (269 aa)) is the tr-type G domain. GTP contacts are provided by residues 18–25 (SHPDAGKT), 86–90 (DTPGH), and 140–143 (NKLD).

This sequence belongs to the TRAFAC class translation factor GTPase superfamily. Classic translation factor GTPase family. PrfC subfamily.

The protein resides in the cytoplasm. Functionally, increases the formation of ribosomal termination complexes and stimulates activities of RF-1 and RF-2. It binds guanine nucleotides and has strong preference for UGA stop codons. It may interact directly with the ribosome. The stimulation of RF-1 and RF-2 is significantly reduced by GTP and GDP, but not by GMP. In Shewanella baltica (strain OS223), this protein is Peptide chain release factor 3.